The following is a 208-amino-acid chain: Probable nicotinate-nucleotide adenylyltransferase (208 aa).

It belongs to the NadD family.

It catalyses the reaction nicotinate beta-D-ribonucleotide + ATP + H(+) = deamido-NAD(+) + diphosphate. The protein operates within cofactor biosynthesis; NAD(+) biosynthesis; deamido-NAD(+) from nicotinate D-ribonucleotide: step 1/1. Its function is as follows. Catalyzes the reversible adenylation of nicotinate mononucleotide (NaMN) to nicotinic acid adenine dinucleotide (NaAD). This is Probable nicotinate-nucleotide adenylyltransferase from Symbiobacterium thermophilum (strain DSM 24528 / JCM 14929 / IAM 14863 / T).